The primary structure comprises 366 residues: Neuropeptide Y receptor type 1 (366 aa).

The Extracellular segment spans residues 1 to 39; sequence MNFSTYFENLSVPNNISGNITFPISEDCALPLPMIFTLA. Asn-2, Asn-9, and Asn-15 each carry an N-linked (GlcNAc...) asparagine glycan. The chain crosses the membrane as a helical span at residues 40-60; sequence LAYGAVIILGLSGNLALIIII. Topologically, residues 61–82 are cytoplasmic; that stretch reads LKQKEMRNVTNILIVNLSFSDL. Residues 83 to 103 form a helical membrane-spanning segment; that stretch reads LATIMCLPFTLIYTLMDHWIF. Residues 104 to 111 lie on the Extracellular side of the membrane; the sequence is GEVMCKLN. Cys-108 and Cys-193 are oxidised to a cystine. Residues 112–132 form a helical membrane-spanning segment; that stretch reads EYIQCVSVTVSIFSLVLIAIE. Over 133–149 the chain is Cytoplasmic; sequence RHQLIINPRGWRPNNRH. The chain crosses the membrane as a helical span at residues 150–170; that stretch reads ACFGITVIWGFAMACSTPLMM. At 171–203 the chain is on the extracellular side; it reads YSVLTDEPFKNISLDSYIGKYVCLEDFPEDKFR. N-linked (GlcNAc...) asparagine glycosylation occurs at Asn-181. The helical transmembrane segment at 204–224 threads the bilayer; it reads LSYTTLLFILQYLGPLCFIFV. At 225–260 the chain is on the cytoplasmic side; that stretch reads CYTKIFLRLKRRNNMMDKIRDNKYRSSETKRINIML. A helical transmembrane segment spans residues 261-281; sequence LSIVVGFALCWLPFFIFNLVF. The Extracellular segment spans residues 282–294; sequence DWNHEAVATCNHN. Residues 295 to 315 traverse the membrane as a helical segment; it reads LLFLICHLTAMISTCVNPIFY. The Cytoplasmic segment spans residues 316 to 366; that stretch reads GFLNKNFQRDLQFFFNFCDFRSREDDYETIAMSTMHTDVSKTSLKQASPIA. The S-palmitoyl cysteine moiety is linked to residue Cys-333.

The protein belongs to the G-protein coupled receptor 1 family.

It localises to the cell membrane. Functionally, receptor for neuropeptide Y and peptide YY. The sequence is that of Neuropeptide Y receptor type 1 (npy1r) from Xenopus laevis (African clawed frog).